Reading from the N-terminus, the 72-residue chain is DNA-directed RNA polymerase subunit Rpo10 (72 aa).

Zn(2+) contacts are provided by C7, C10, C53, and C54.

It belongs to the archaeal Rpo10/eukaryotic RPB10 RNA polymerase subunit family. Part of the RNA polymerase complex. The cofactor is Zn(2+).

It localises to the cytoplasm. It catalyses the reaction RNA(n) + a ribonucleoside 5'-triphosphate = RNA(n+1) + diphosphate. DNA-dependent RNA polymerase (RNAP) catalyzes the transcription of DNA into RNA using the four ribonucleoside triphosphates as substrates. This is DNA-directed RNA polymerase subunit Rpo10 from Thermoplasma volcanium (strain ATCC 51530 / DSM 4299 / JCM 9571 / NBRC 15438 / GSS1).